The following is a 173-amino-acid chain: Phosphopantetheine adenylyltransferase (173 aa).

Thr9 lines the substrate pocket. Residues 9 to 10 (TF) and His17 contribute to the ATP site. Substrate-binding residues include Lys41, Thr75, and Arg89. ATP is bound by residues 90 to 92 (GLR), Glu100, and 125 to 131 (HIYLSSS).

Belongs to the bacterial CoaD family. As to quaternary structure, homohexamer. Mg(2+) serves as cofactor.

Its subcellular location is the cytoplasm. It carries out the reaction (R)-4'-phosphopantetheine + ATP + H(+) = 3'-dephospho-CoA + diphosphate. Its pathway is cofactor biosynthesis; coenzyme A biosynthesis; CoA from (R)-pantothenate: step 4/5. In terms of biological role, reversibly transfers an adenylyl group from ATP to 4'-phosphopantetheine, yielding dephospho-CoA (dPCoA) and pyrophosphate. This is Phosphopantetheine adenylyltransferase from Methylacidiphilum infernorum (isolate V4) (Methylokorus infernorum (strain V4)).